Consider the following 144-residue polypeptide: Large-conductance mechanosensitive channel (144 aa).

The next 2 helical transmembrane spans lie at 16–36 and 86–106; these read VIDL…VDSV and GNFL…FLMV.

The protein belongs to the MscL family. Homopentamer.

It localises to the cell inner membrane. Channel that opens in response to stretch forces in the membrane lipid bilayer. May participate in the regulation of osmotic pressure changes within the cell. The polypeptide is Large-conductance mechanosensitive channel (Cupriavidus pinatubonensis (strain JMP 134 / LMG 1197) (Cupriavidus necator (strain JMP 134))).